The chain runs to 275 residues: Elongation factor Ts (275 aa).

The involved in Mg(2+) ion dislocation from EF-Tu stretch occupies residues 76 to 79 (TDFV).

It belongs to the EF-Ts family.

It localises to the cytoplasm. Functionally, associates with the EF-Tu.GDP complex and induces the exchange of GDP to GTP. It remains bound to the aminoacyl-tRNA.EF-Tu.GTP complex up to the GTP hydrolysis stage on the ribosome. The sequence is that of Elongation factor Ts from Rhodococcus jostii (strain RHA1).